The following is a 550-amino-acid chain: Hydroxylamine reductase (550 aa).

[2Fe-2S] cluster is bound by residues Cys3, Cys6, Cys18, and Cys25. Positions 249, 273, 317, 405, 433, 458, 492, and 494 each coordinate hybrid [4Fe-2O-2S] cluster. Cys405 bears the Cysteine persulfide mark.

Belongs to the HCP family. [2Fe-2S] cluster is required as a cofactor. It depends on hybrid [4Fe-2O-2S] cluster as a cofactor.

The protein resides in the cytoplasm. It carries out the reaction A + NH4(+) + H2O = hydroxylamine + AH2 + H(+). Its function is as follows. Catalyzes the reduction of hydroxylamine to form NH(3) and H(2)O. This is Hydroxylamine reductase from Shigella flexneri serotype 5b (strain 8401).